The sequence spans 320 residues: Malate dehydrogenase (320 aa).

NAD(+) is bound by residues 10–15 (GAGQIG) and aspartate 34. Residues arginine 83 and arginine 89 each coordinate substrate. NAD(+) contacts are provided by residues asparagine 96 and 119–121 (ITN). Substrate contacts are provided by asparagine 121 and arginine 152. The active-site Proton acceptor is histidine 176.

It belongs to the LDH/MDH superfamily. MDH type 3 family.

The enzyme catalyses (S)-malate + NAD(+) = oxaloacetate + NADH + H(+). Functionally, catalyzes the reversible oxidation of malate to oxaloacetate. This Beijerinckia indica subsp. indica (strain ATCC 9039 / DSM 1715 / NCIMB 8712) protein is Malate dehydrogenase.